A 97-amino-acid chain; its full sequence is Small ribosomal subunit protein bS21 (97 aa).

The tract at residues 37–97 (EKPSVRKARE…APASSPTTTA (61 aa)) is disordered. Residues 76–97 (RAVAPRRPAAAPAPASSPTTTA) are compositionally biased toward low complexity.

Belongs to the bacterial ribosomal protein bS21 family.

The chain is Small ribosomal subunit protein bS21 from Methylobacterium sp. (strain 4-46).